A 60-amino-acid chain; its full sequence is UPF0181 protein PMI1604 (60 aa).

Belongs to the UPF0181 family.

This chain is UPF0181 protein PMI1604, found in Proteus mirabilis (strain HI4320).